We begin with the raw amino-acid sequence, 205 residues long: Holliday junction branch migration complex subunit RuvA (205 aa).

The tract at residues 1 to 64 is domain I; that stretch reads MIGKLKGVID…EDMIRLYGFA (64 aa). Positions 65–143 are domain II; it reads TQLEREWFRL…AFAGEASGTI (79 aa). Positions 144 to 152 are flexible linker; it reads GLKQELGAG. Residues 153 to 205 are domain III; it reads AAPAPVADAVSALSNLGYSRDQAANAVAAALKETGEGADSAKLIRLGLKELSQ.

The protein belongs to the RuvA family. Homotetramer. Forms an RuvA(8)-RuvB(12)-Holliday junction (HJ) complex. HJ DNA is sandwiched between 2 RuvA tetramers; dsDNA enters through RuvA and exits via RuvB. An RuvB hexamer assembles on each DNA strand where it exits the tetramer. Each RuvB hexamer is contacted by two RuvA subunits (via domain III) on 2 adjacent RuvB subunits; this complex drives branch migration. In the full resolvosome a probable DNA-RuvA(4)-RuvB(12)-RuvC(2) complex forms which resolves the HJ.

Its subcellular location is the cytoplasm. Functionally, the RuvA-RuvB-RuvC complex processes Holliday junction (HJ) DNA during genetic recombination and DNA repair, while the RuvA-RuvB complex plays an important role in the rescue of blocked DNA replication forks via replication fork reversal (RFR). RuvA specifically binds to HJ cruciform DNA, conferring on it an open structure. The RuvB hexamer acts as an ATP-dependent pump, pulling dsDNA into and through the RuvAB complex. HJ branch migration allows RuvC to scan DNA until it finds its consensus sequence, where it cleaves and resolves the cruciform DNA. The polypeptide is Holliday junction branch migration complex subunit RuvA (Brucella abortus (strain S19)).